Reading from the N-terminus, the 566-residue chain is Macrophage colony-stimulating factor 1 (566 aa).

A signal peptide spans 1 to 32 (MTARGAAGRCPSSTWMGSRLLLVCLLVSRSVA). Topologically, residues 33-508 (EVSEHCSHMI…SSIQDPQTSA (476 aa)) are extracellular. Asn-106, Asn-153, and Asn-171 each carry an N-linked (GlcNAc...) asparagine glycan. Disordered regions lie at residues 197-417 (PSSD…KLLP) and 434-484 (GKKS…GAAR). Positions 253–265 (PRSTCQTLESTEQ) are enriched in polar residues. Ser-302 carries an O-linked (Xyl...) (chondroitin sulfate) serine glycan. The segment covering 348-360 (DQQPTNITDTPLT) has biased composition (polar residues). An N-linked (GlcNAc...) asparagine glycan is attached at Asn-353. Thr-355 and Thr-357 each carry an O-linked (GalNAc...) threonine glycan. Residues 377–394 (EKTDGSSTLREDQQEPRS) are compositionally biased toward basic and acidic residues. Positions 400-410 (LNPQRVGNSAT) are enriched in polar residues. The span at 434–445 (GKKSTRDRRSPA) shows a compositional bias: basic and acidic residues. A helical transmembrane segment spans residues 509 to 531 (FVFWVLGIILVLLAVGGLLFYSW). The Cytoplasmic portion of the chain corresponds to 532 to 566 (KRRSHRDPRTLDSSVGRPEGSSLAQDEDRQVELPV). Residues 538–566 (DPRTLDSSVGRPEGSSLAQDEDRQVELPV) are disordered. Basic and acidic residues predominate over residues 557–566 (DEDRQVELPV).

As to quaternary structure, homodimer or heterodimer; disulfide-linked. Likely to exist in multiple forms: homodimer consisting of 2 identical 150-200 kDa proteoglycan subunits, heterodimer consisting of a 150-200 kDa proteoglycan subunit and a truncated 43 kDa subunit, and a homodimer consisting of 2 identical 43 kDa subunits. Interacts with CSF1R. N-glycosylated. In terms of processing, O-glycosylated; contains chondroitin sulfate.

Its subcellular location is the cell membrane. It localises to the secreted. The protein localises to the extracellular space. In terms of biological role, cytokine that plays an essential role in the regulation of survival, proliferation and differentiation of hematopoietic precursor cells, especially mononuclear phagocytes, such as macrophages and monocytes. Promotes the release of pro-inflammatory chemokines, and thereby plays an important role in innate immunity and in inflammatory processes. Plays an important role in the regulation of osteoclast proliferation and differentiation, the regulation of bone resorption, and is required for normal bone development. Required for normal male and female fertility. Promotes reorganization of the actin cytoskeleton, regulates formation of membrane ruffles, cell adhesion and cell migration. Plays a role in lipoprotein clearance. The polypeptide is Macrophage colony-stimulating factor 1 (Csf1) (Rattus norvegicus (Rat)).